The following is a 57-amino-acid chain: MEPLTLLIIIGGVILGNELIISLSRSYRLHNHKMAYRKHKHKTQENYETFASDKKRT.

A helical membrane pass occupies residues 3-23 (PLTLLIIIGGVILGNELIISL). Positions 38–57 (KHKHKTQENYETFASDKKRT) are disordered.

It localises to the host membrane. This is an uncharacterized protein from Acidianus bottle-shaped virus (isolate Italy/Pozzuoli) (ABV).